The primary structure comprises 167 residues: Large ribosomal subunit protein uL10 (167 aa).

Belongs to the universal ribosomal protein uL10 family. As to quaternary structure, part of the ribosomal stalk of the 50S ribosomal subunit. The N-terminus interacts with L11 and the large rRNA to form the base of the stalk. The C-terminus forms an elongated spine to which L12 dimers bind in a sequential fashion forming a multimeric L10(L12)X complex.

Forms part of the ribosomal stalk, playing a central role in the interaction of the ribosome with GTP-bound translation factors. This chain is Large ribosomal subunit protein uL10, found in Streptococcus mutans serotype c (strain ATCC 700610 / UA159).